A 516-amino-acid polypeptide reads, in one-letter code: MAVPTFVDRVTLHVSAGRGGNGVASVHREKFKPLGGPDGGNGGPGGSVTLRVDPDVTTLLDYHHSPKRRAEHGGHGAGAHRNGAHGADLVLPVPDGTVVSDPQGHLLADLVGPGTELVVAQGGRGGLGNAALASAKRKAPGFALLGEPGDELEIVLELKVVADIGLVGFPSAGKSSLIAAISRARPKIADYPFTTLVPNLGVVSAGDTTFTVADVPGLIEGASEGRGLGHDFLRHIERCAAIVHVVDTASIEPGRNPVDDLDVIENELTRYGGLEDRPRLVALNKVDVPDGRDIAGFVVDELRQRGLRVFEVSAASGEGLRELTFAMAGIVEAARAAKPAVEATRIVLRPPSVDGSDAFTVTATPDGWRVRGEKPERWVRQTDFSNDEAVGFLADRLNRLGVETRLAEMGAEEGDAVLIGDPENAVVFDFKPGVDAAAEILSRRGEDQRFDESRPAARRRRAIEEAMADRAEGETRADVARRLDRPAREDGGAYGPQSYEIGGRDDPDWAEEDLGE.

The 158-residue stretch at 4–161 folds into the Obg domain; that stretch reads PTFVDRVTLH…LEIVLELKVV (158 aa). The OBG-type G domain maps to 162–332; that stretch reads ADIGLVGFPS…LTFAMAGIVE (171 aa). GTP-binding positions include 168–175, 193–197, 214–217, 284–287, and 313–315; these read GFPSAGKS, FTTLV, DVPG, NKVD, and SAA. Mg(2+)-binding residues include S175 and T195. One can recognise an OCT domain in the interval 351–432; that stretch reads PSVDGSDAFT…ENAVVFDFKP (82 aa). A compositionally biased stretch (basic and acidic residues) spans 466 to 491; the sequence is AMADRAEGETRADVARRLDRPAREDG. A disordered region spans residues 466-516; the sequence is AMADRAEGETRADVARRLDRPAREDGGAYGPQSYEIGGRDDPDWAEEDLGE.

It belongs to the TRAFAC class OBG-HflX-like GTPase superfamily. OBG GTPase family. In terms of assembly, monomer. Mg(2+) serves as cofactor.

The protein resides in the cytoplasm. Its function is as follows. An essential GTPase which binds GTP, GDP and possibly (p)ppGpp with moderate affinity, with high nucleotide exchange rates and a fairly low GTP hydrolysis rate. Plays a role in control of the cell cycle, stress response, ribosome biogenesis and in those bacteria that undergo differentiation, in morphogenesis control. The chain is GTPase Obg from Nocardioides sp. (strain ATCC BAA-499 / JS614).